The following is a 448-amino-acid chain: Glutamyl-tRNA reductase (448 aa).

Residues 48-51 (TCNR), Ser100, 105-107 (EDQ), and Gln111 each bind substrate. Cys49 (nucleophile) is an active-site residue. 180-185 (GAGEIG) is a binding site for NADP(+).

The protein belongs to the glutamyl-tRNA reductase family. As to quaternary structure, homodimer.

The enzyme catalyses (S)-4-amino-5-oxopentanoate + tRNA(Glu) + NADP(+) = L-glutamyl-tRNA(Glu) + NADPH + H(+). Its pathway is porphyrin-containing compound metabolism; protoporphyrin-IX biosynthesis; 5-aminolevulinate from L-glutamyl-tRNA(Glu): step 1/2. Catalyzes the NADPH-dependent reduction of glutamyl-tRNA(Glu) to glutamate 1-semialdehyde (GSA). In Methanosarcina mazei (strain ATCC BAA-159 / DSM 3647 / Goe1 / Go1 / JCM 11833 / OCM 88) (Methanosarcina frisia), this protein is Glutamyl-tRNA reductase.